The sequence spans 445 residues: MHATYKSAIVRTGPNQVHVNDPEVYKNTFASASPFDKSRFFYSSVGVGDAIGAIMDRKQHHIRRTLLSPGLRANVILSYSPNLHKLVMNCADVMSGQARQAKSINLLRYTRSLTVDVIGDFTFGRPMGLVNEEDEMPELIRDLQDFSSQFHLWKHFPLLRKLVTAIPKSISRKWMPGFVQLREKSTAAVNEYLAGKQAGKPVSNTLKEGTFLDLLLNPPEKITSEAPKPSVLIDEGCAFITGGSDTTGFTMENATYLVLRHPSCLQKLRQELDEASRHIKDVFSPQHLLQLPFLSAVVKETLRLYTPAASPLPRTVPDDGVMIHGHFLPDGTILTHSLYLIHHNPNFFTNPKSFQPERWLGSSAKDLEQYYVPFSKGSRSCIGMTLAYHEIYTYLAIVFSRFDMELFNTTDRDMEWRDHFFVKRKGVLKVRIVRDRWSGEEFTSP.

Residue cysteine 381 coordinates heme.

This sequence belongs to the cytochrome P450 family. The cofactor is heme.

It functions in the pathway secondary metabolite biosynthesis. It participates in alkaloid biosynthesis. Its pathway is mycotoxin biosynthesis. Functionally, cytochrome P450 monooxygenase; part of the gene cluster that mediates the biosynthesis of penigequinolones, potent insecticidal alkaloids that contain a highly modified 10-carbon prenyl group. The first stage is catalyzed by the nonribosomal peptide synthetase penN that condenses anthranilic acid and O-methyl-L-tyrosine to produce 4'-methoxycyclopeptin. 4'-methoxycyclopeptin is then converted to 4'-methoxydehydrocyclopeptin by the ketoglutarate-dependent dioxygenase penM through dehydrogenation to form a double bond between C-alpha and C-beta of the O-methyltyrosine side chain. PenM also converts its first product methoxydehydrocyclopeptin to 4'-methoxycyclopenin. The following conversion of 4'methoxycyclopenin into 4'-methoxyviridicatin is catalyzed by the cyclopenase penL. 4'-methoxyviridicatin is the precursor of quinolone natural products, and is further converted to quinolinone B. The prenyltransferase penI then catalyzes the canonical Friedel-Crafts alkylation of quinolinone B with dimethylallyl cation to yield dimethylallyl quinolone, which is subjected to FAD-dependent dehydrogenation by the FAD-linked oxidoreductase penH to yield conjugated aryl diene. The delta(3') double bond then serves as the site of the second alkylation with DMAPP catalyzed by the prenyltransferase penG to yield a carbenium ion intermediate, which can be attacked by H(2)O to yield a styrenyl quinolone containing a C3'-hydroxyprenyl chain, or undergo cyclization to yield yaequinolones J1 and J2. The conversion of the styrenyl quinolone into the tetrahydrofuran-containing yaequinolone C is performed by the FAD-dependent monooxygenase penE and involves epoxidation of the terminal C7'-C8' olefin, followed by epoxide ring opening initiated by the C3' hydroxyl group. The predicted cysteine hydrolase penJ acts as an epoxide hydrolase that enhances the rate of the 5-exo-tet cyclization step, increasing the yield of yaequinolone C. PenF catalyzes the cationic rearrangement of the epoxide formed by penE (before ring opening to produce yaequinolone C) into yaequinolone D. Finally, the short-chain dehydrogenase/reductase (SDR)-like reductase penD, catalyzes both the dehydration of yaequinolone D and the reduction of the resulting oxonium to yield penigequinolone. This chain is Cytochrome P450 monooxygenase penB, found in Penicillium thymicola.